The primary structure comprises 138 residues: Sec-independent protein translocase protein TatB (138 aa).

A helical membrane pass occupies residues 1 to 21; the sequence is MFDIGFSELLLIAVVALVVLG. The segment at 116–138 is disordered; it reads VHHVHVPPPSTSTHGNNGQEKSQ. The span at 126 to 138 shows a compositional bias: polar residues; the sequence is TSTHGNNGQEKSQ.

It belongs to the TatB family. The Tat system comprises two distinct complexes: a TatABC complex, containing multiple copies of TatA, TatB and TatC subunits, and a separate TatA complex, containing only TatA subunits. Substrates initially bind to the TatABC complex, which probably triggers association of the separate TatA complex to form the active translocon.

It localises to the cell inner membrane. Part of the twin-arginine translocation (Tat) system that transports large folded proteins containing a characteristic twin-arginine motif in their signal peptide across membranes. Together with TatC, TatB is part of a receptor directly interacting with Tat signal peptides. TatB may form an oligomeric binding site that transiently accommodates folded Tat precursor proteins before their translocation. The chain is Sec-independent protein translocase protein TatB from Xylella fastidiosa (strain Temecula1 / ATCC 700964).